A 315-amino-acid polypeptide reads, in one-letter code: Aspartate carbamoyltransferase catalytic subunit (315 aa).

Positions 64 and 65 each coordinate carbamoyl phosphate. An L-aspartate-binding site is contributed by Lys-92. Carbamoyl phosphate is bound by residues Arg-114, His-142, and Gln-145. Residues Arg-175 and Arg-229 each coordinate L-aspartate. Carbamoyl phosphate is bound by residues Gly-270 and Pro-271.

Belongs to the aspartate/ornithine carbamoyltransferase superfamily. ATCase family. In terms of assembly, heterododecamer (2C3:3R2) of six catalytic PyrB chains organized as two trimers (C3), and six regulatory PyrI chains organized as three dimers (R2).

It catalyses the reaction carbamoyl phosphate + L-aspartate = N-carbamoyl-L-aspartate + phosphate + H(+). Its pathway is pyrimidine metabolism; UMP biosynthesis via de novo pathway; (S)-dihydroorotate from bicarbonate: step 2/3. Functionally, catalyzes the condensation of carbamoyl phosphate and aspartate to form carbamoyl aspartate and inorganic phosphate, the committed step in the de novo pyrimidine nucleotide biosynthesis pathway. In Xanthobacter autotrophicus (strain ATCC BAA-1158 / Py2), this protein is Aspartate carbamoyltransferase catalytic subunit.